A 307-amino-acid polypeptide reads, in one-letter code: Ubiquitin recognition factor in ER-associated degradation protein 1 (307 aa).

At methionine 1 the chain carries N-acetylmethionine. Residues serine 129, serine 231, serine 245, serine 247, and serine 299 each carry the phosphoserine modification. Disordered stretches follow at residues 231–256 (SGNR…DIKR) and 288–307 (GRFV…GRKP).

This sequence belongs to the UFD1 family. As to quaternary structure, heterodimer with NPLOC4, this heterodimer binds VCP and inhibits Golgi membrane fusion. Interacts with USP13. Interacts with ZFAND2B; probably through VCP. As to expression, found in adult heart, skeletal muscle and pancreas, and in fetal liver and kidney.

Its subcellular location is the nucleus. The protein localises to the cytoplasm. It localises to the cytosol. The protein operates within protein degradation; proteasomal ubiquitin-dependent pathway. Essential component of the ubiquitin-dependent proteolytic pathway which degrades ubiquitin fusion proteins. The ternary complex containing UFD1, VCP and NPLOC4 binds ubiquitinated proteins and is necessary for the export of misfolded proteins from the ER to the cytoplasm, where they are degraded by the proteasome. The NPLOC4-UFD1-VCP complex regulates spindle disassembly at the end of mitosis and is necessary for the formation of a closed nuclear envelope. It may be involved in the development of some ectoderm-derived structures. Acts as a negative regulator of type I interferon production via the complex formed with VCP and NPLOC4, which binds to RIGI and recruits RNF125 to promote ubiquitination and degradation of RIGI. The protein is Ubiquitin recognition factor in ER-associated degradation protein 1 of Homo sapiens (Human).